The following is a 513-amino-acid chain: ATP synthase subunit alpha 1 (513 aa).

169-176 (GDRQTGKT) is a binding site for ATP.

Belongs to the ATPase alpha/beta chains family. As to quaternary structure, F-type ATPases have 2 components, CF(1) - the catalytic core - and CF(0) - the membrane proton channel. CF(1) has five subunits: alpha(3), beta(3), gamma(1), delta(1), epsilon(1). CF(0) has three main subunits: a(1), b(2) and c(9-12). The alpha and beta chains form an alternating ring which encloses part of the gamma chain. CF(1) is attached to CF(0) by a central stalk formed by the gamma and epsilon chains, while a peripheral stalk is formed by the delta and b chains.

The protein localises to the cell inner membrane. The catalysed reaction is ATP + H2O + 4 H(+)(in) = ADP + phosphate + 5 H(+)(out). Produces ATP from ADP in the presence of a proton gradient across the membrane. The alpha chain is a regulatory subunit. This Methylococcus capsulatus (strain ATCC 33009 / NCIMB 11132 / Bath) protein is ATP synthase subunit alpha 1.